The chain runs to 216 residues: Protein InaA (216 aa).

This sequence belongs to the protein kinase superfamily. KdkA/RfaP family.

May be an environmental sensor responsive to several stimuli, including internal pH, proton motive force, temperature, and possibly other unknown factors. In Escherichia coli (strain K12), this protein is Protein InaA (inaA).